We begin with the raw amino-acid sequence, 412 residues long: Adipocyte plasma membrane-associated protein (412 aa).

Positions 1-32 (MTEADGLRQRRPLRPQVVTDDNRTPEAKGGSS) are disordered. Residues 1–39 (MTEADGLRQRRPLRPQVVTDDNRTPEAKGGSSFSGRVFR) lie on the Cytoplasmic side of the membrane. Threonine 19 is modified (phosphothreonine). Residues 40–60 (ATFLMLAAFLTIPLLGALVLL) traverse the membrane as a helical segment. Residues 61-412 (DSPIDPEPLS…RAPYLCRLRL (352 aa)) lie on the Extracellular side of the membrane. The N-linked (GlcNAc...) asparagine glycan is linked to asparagine 159.

Belongs to the strictosidine synthase family.

The protein resides in the membrane. In terms of biological role, exhibits strong arylesterase activity with beta-naphthyl acetate and phenyl acetate. May play a role in adipocyte differentiation. The chain is Adipocyte plasma membrane-associated protein (APMAP) from Bos taurus (Bovine).